Reading from the N-terminus, the 154-residue chain is Myoglobin (154 aa).

The Globin domain occupies 2 to 148; that stretch reads GLSDQEWQQV…FRNDMASKYK (147 aa). A nitrite-binding site is contributed by H65. Residue H65 coordinates O2. A heme b-binding site is contributed by H94.

The protein belongs to the globin family. As to quaternary structure, monomeric.

It localises to the cytoplasm. Its subcellular location is the sarcoplasm. The catalysed reaction is Fe(III)-heme b-[protein] + nitric oxide + H2O = Fe(II)-heme b-[protein] + nitrite + 2 H(+). It catalyses the reaction H2O2 + AH2 = A + 2 H2O. In terms of biological role, monomeric heme protein which primary function is to store oxygen and facilitate its diffusion within muscle tissues. Reversibly binds oxygen through a pentacoordinated heme iron and enables its timely and efficient release as needed during periods of heightened demand. Depending on the oxidative conditions of tissues and cells, and in addition to its ability to bind oxygen, it also has a nitrite reductase activity whereby it regulates the production of bioactive nitric oxide. Under stress conditions, like hypoxia and anoxia, it also protects cells against reactive oxygen species thanks to its pseudoperoxidase activity. This Cerorhinca monocerata (Rhinoceros auklet) protein is Myoglobin (MB).